A 132-amino-acid chain; its full sequence is Small ribosomal subunit protein uS8 (132 aa).

The protein belongs to the universal ribosomal protein uS8 family. In terms of assembly, part of the 30S ribosomal subunit. Contacts proteins S5 and S12.

One of the primary rRNA binding proteins, it binds directly to 16S rRNA central domain where it helps coordinate assembly of the platform of the 30S subunit. The polypeptide is Small ribosomal subunit protein uS8 (Ehrlichia canis (strain Jake)).